The following is a 930-amino-acid chain: Zn(2)-C6 fungal-type transcription factor FTF1c (930 aa).

A DNA-binding region (zn(2)-C6 fungal-type) is located at residues 137–164 (CIPCRRKKIRCSGEKPACEHCLRSYIPC).

The protein localises to the nucleus. Zn(2)-C6 fungal-type transcription factor that has a role in the establishment of the fungus within the plant and/or the progress of the disease. Regulates the expression of virulence factors such as SIX1 and SIX6. The chain is Zn(2)-C6 fungal-type transcription factor FTF1c from Fusarium oxysporum f. sp. lycopersici (strain 4287 / CBS 123668 / FGSC 9935 / NRRL 34936) (Fusarium vascular wilt of tomato).